Reading from the N-terminus, the 2314-residue chain is Protein Ycf2 (2314 aa).

1653-1660 (GSIGTGRS) serves as a coordination point for ATP.

The protein belongs to the Ycf2 family.

The protein resides in the plastid. The protein localises to the chloroplast stroma. In terms of biological role, probable ATPase of unknown function. Its presence in a non-photosynthetic plant (Epifagus virginiana) and experiments in tobacco indicate that it has an essential function which is probably not related to photosynthesis. This chain is Protein Ycf2, found in Piper cenocladum (Ant piper).